The chain runs to 228 residues: MRIRRRDEKENQEYKKGLWTVEEDNILMDYVLNHGTGQWNRIVRKTGLKRCGKSCRLRWMNYLSPNVNKGNFTEQEEDLIIRLHKLLGNRWSLIAKRVPGRTDNQVKNYWNTHLSKKLVGDYSSAVKTTGEDDDSPPSLFITAATPSSCHHQQENIYENIAKSFNGVVSASYEDKPKQELAQKDVLMATTNDPSHYYGNNALWVHDDDFELSSLVMMNFASGDVEYCL.

HTH myb-type domains are found at residues 11-63 (NQEY…MNYL) and 64-118 (SPNV…SKKL). DNA-binding regions (H-T-H motif) lie at residues 39-63 (WNRI…MNYL) and 91-114 (WSLI…NTHL).

As to quaternary structure, homodimer and heterodimer with MYB82. Interacts directly with GL3 and BHLH2. Part of a complex made of GL1, GL3 or BHLH2, and TTG1. Also interacts with BHLH2/EGL3/MYC146 and BHLH12/MYC1. Interacts with MYB82. In terms of tissue distribution, expressed in leaves, stems and flowers. Expressed in trichome cells and in leaf primordia.

It localises to the nucleus. Its function is as follows. Transcription activator, when associated with BHLH2/EGL3/MYC146 or BHLH12/MYC1. Involved in epidermal cell fate specification in leaves. Together with TTG1 and GL3, promotes trichome formation and endoreplication. Regulates the production of a signal that induces hair (trichome) precursor cells on leaf primordia to differentiate. Binds to the WER-binding sites (WBS) promoter regions and activates the transcription of target genes. This is Trichome differentiation protein GL1 from Arabidopsis thaliana (Mouse-ear cress).